The sequence spans 281 residues: NADPH-dependent 7-cyano-7-deazaguanine reductase (281 aa).

88 to 90 (IES) lines the substrate pocket. 90–91 (SK) provides a ligand contact to NADPH. Cys189 (thioimide intermediate) is an active-site residue. Residue Asp196 is the Proton donor of the active site. 228–229 (HE) is a substrate binding site. 257-258 (RG) provides a ligand contact to NADPH.

It belongs to the GTP cyclohydrolase I family. QueF type 2 subfamily. As to quaternary structure, homodimer.

The protein resides in the cytoplasm. It carries out the reaction 7-aminomethyl-7-carbaguanine + 2 NADP(+) = 7-cyano-7-deazaguanine + 2 NADPH + 3 H(+). It functions in the pathway tRNA modification; tRNA-queuosine biosynthesis. Catalyzes the NADPH-dependent reduction of 7-cyano-7-deazaguanine (preQ0) to 7-aminomethyl-7-deazaguanine (preQ1). The protein is NADPH-dependent 7-cyano-7-deazaguanine reductase of Yersinia enterocolitica serotype O:8 / biotype 1B (strain NCTC 13174 / 8081).